The sequence spans 206 residues: Putative acetyltransferase OgpAT (206 aa).

The region spanning 5-205 (VVIRRATAAD…EVVVGRRLLD (201 aa)) is the N-acetyltransferase domain. Acetyl-CoA-binding positions include 135–138 (HIDL), 144–148 (GRGVG), 175–177 (NPR), and histidine 184.

The protein belongs to the acetyltransferase family. As to quaternary structure, monomer.

Its function is as follows. Binds acetyl-CoA, but not butyryl-CoA or decanoyl-CoA. May have acetyltransferase activity. This is Putative acetyltransferase OgpAT from Oceanicola granulosus (strain ATCC BAA-861 / DSM 15982 / KCTC 12143 / HTCC2516).